We begin with the raw amino-acid sequence, 201 residues long: MEKFTTHTGVGVPLRASNVDTDQIIPAVYLKRISRTGFEDALFAGWRQDPDFILNTEPFSGGTVLVAGSDFGTGSSREHAVWALKDYGFRAVISPRFADIFRGNSAKQGLVAAQVEQEDVERIWKELENRPGTTVTVDLVTRTVECGDVTAPFQIDDDTRRRLLEGLDDIAVTLGHQAEIDAYEADRPAYKPTTLPARTAG.

The protein belongs to the LeuD family. LeuD type 1 subfamily. Heterodimer of LeuC and LeuD.

It carries out the reaction (2R,3S)-3-isopropylmalate = (2S)-2-isopropylmalate. It functions in the pathway amino-acid biosynthesis; L-leucine biosynthesis; L-leucine from 3-methyl-2-oxobutanoate: step 2/4. Its function is as follows. Catalyzes the isomerization between 2-isopropylmalate and 3-isopropylmalate, via the formation of 2-isopropylmaleate. The sequence is that of 3-isopropylmalate dehydratase small subunit from Micrococcus luteus (strain ATCC 4698 / DSM 20030 / JCM 1464 / CCM 169 / CCUG 5858 / IAM 1056 / NBRC 3333 / NCIMB 9278 / NCTC 2665 / VKM Ac-2230) (Micrococcus lysodeikticus).